Here is an 89-residue protein sequence, read N- to C-terminus: Large ribosomal subunit protein eL43 (89 aa).

Residues Cys38, Cys41, Cys56, and Cys59 each contribute to the Zn(2+) site. The C4-type zinc-finger motif lies at 38–59 (CPVCHKRAVKRVGTGIWRCTKC).

Belongs to the eukaryotic ribosomal protein eL43 family. Putative zinc-binding subfamily. In terms of assembly, part of the 50S ribosomal subunit. The cofactor is Zn(2+).

Functionally, binds to the 23S rRNA. The sequence is that of Large ribosomal subunit protein eL43 from Methanopyrus kandleri (strain AV19 / DSM 6324 / JCM 9639 / NBRC 100938).